Reading from the N-terminus, the 249-residue chain is Triosephosphate isomerase (249 aa).

9–11 (NWK) is a substrate binding site. Catalysis depends on histidine 95, which acts as the Electrophile. Glutamate 166 acts as the Proton acceptor in catalysis. Substrate-binding positions include glycine 172, serine 211, and 232–233 (GG).

Belongs to the triosephosphate isomerase family. As to quaternary structure, homodimer.

The protein localises to the cytoplasm. It catalyses the reaction D-glyceraldehyde 3-phosphate = dihydroxyacetone phosphate. Its pathway is carbohydrate biosynthesis; gluconeogenesis. The protein operates within carbohydrate degradation; glycolysis; D-glyceraldehyde 3-phosphate from glycerone phosphate: step 1/1. In terms of biological role, involved in the gluconeogenesis. Catalyzes stereospecifically the conversion of dihydroxyacetone phosphate (DHAP) to D-glyceraldehyde-3-phosphate (G3P). The chain is Triosephosphate isomerase from Legionella pneumophila (strain Paris).